A 106-amino-acid polypeptide reads, in one-letter code: Large ribosomal subunit protein P1B (106 aa).

S2 is subject to N-acetylserine. A compositionally biased stretch (low complexity) spans 69-82 (AGAASGAAAAGGDA). The tract at residues 69–106 (AGAASGAAAAGGDAAAEEEKEEEAAEESDDDMGFGLFD) is disordered. Over residues 83-100 (AAEEEKEEEAAEESDDDM) the composition is skewed to acidic residues. S96 is modified (phosphoserine).

Belongs to the eukaryotic ribosomal protein P1/P2 family. In terms of assembly, component of the large ribosomal subunit (LSU). Mature yeast ribosomes consist of a small (40S) and a large (60S) subunit. The 40S small subunit contains 1 molecule of ribosomal RNA (18S rRNA) and 33 different proteins (encoded by 57 genes). The large 60S subunit contains 3 rRNA molecules (25S, 5.8S and 5S rRNA) and 46 different proteins (encoded by 81 genes). The 5 acidic ribosomal P-proteins form the stalk structure of the 60S subunit. They are organized as a pentameric complex in which uL10/P0 interacts with 2 heterodimers, P1A-P2B and P1B-P2A.

It is found in the cytoplasm. Its function is as follows. Component of the ribosome, a large ribonucleoprotein complex responsible for the synthesis of proteins in the cell. The small ribosomal subunit (SSU) binds messenger RNAs (mRNAs) and translates the encoded message by selecting cognate aminoacyl-transfer RNA (tRNA) molecules. The large subunit (LSU) contains the ribosomal catalytic site termed the peptidyl transferase center (PTC), which catalyzes the formation of peptide bonds, thereby polymerizing the amino acids delivered by tRNAs into a polypeptide chain. The nascent polypeptides leave the ribosome through a tunnel in the LSU and interact with protein factors that function in enzymatic processing, targeting, and the membrane insertion of nascent chains at the exit of the ribosomal tunnel. The protein is Large ribosomal subunit protein P1B of Saccharomyces cerevisiae (strain ATCC 204508 / S288c) (Baker's yeast).